The chain runs to 184 residues: Large ribosomal subunit protein uL15 (184 aa).

Positions 1–55 (MDLSSLSPAKGSVKNKKRVGRGQGSGNGTTAGKGNKGQQSRSGYKRPVSEGGQMP) are disordered. Residues 21 to 35 (RGQGSGNGTTAGKGN) show a composition bias toward gly residues.

The protein belongs to the universal ribosomal protein uL15 family. Part of the 50S ribosomal subunit.

In terms of biological role, binds to the 23S rRNA. This chain is Large ribosomal subunit protein uL15, found in Prosthecochloris aestuarii (strain DSM 271 / SK 413).